Reading from the N-terminus, the 513-residue chain is Putative thymidine phosphorylase 2 (513 aa).

Belongs to the thymidine/pyrimidine-nucleoside phosphorylase family. Type 2 subfamily.

The enzyme catalyses thymidine + phosphate = 2-deoxy-alpha-D-ribose 1-phosphate + thymine. The sequence is that of Putative thymidine phosphorylase 2 from Acidovorax sp. (strain JS42).